A 283-amino-acid polypeptide reads, in one-letter code: RNase adapter protein RapZ (283 aa).

8 to 15 (GRSGSGKS) is a binding site for ATP. Position 56–59 (56–59 (DVRN)) interacts with GTP. Positions 266–283 (RARGKNVQSRHRTLEKRK) are RNA-binding.

Belongs to the RapZ-like family. RapZ subfamily. Homotrimer.

In terms of biological role, modulates the synthesis of GlmS, by affecting the processing and stability of the regulatory small RNA GlmZ. When glucosamine-6-phosphate (GlcN6P) concentrations are high in the cell, RapZ binds GlmZ and targets it to cleavage by RNase E. Consequently, GlmZ is inactivated and unable to activate GlmS synthesis. Under low GlcN6P concentrations, RapZ is sequestered and inactivated by an other regulatory small RNA, GlmY, preventing GlmZ degradation and leading to synthesis of GlmS. The polypeptide is RNase adapter protein RapZ (Yersinia enterocolitica serotype O:8 / biotype 1B (strain NCTC 13174 / 8081)).